The chain runs to 1383 residues: DNA-directed RNA polymerase subunit beta'' (1383 aa).

Positions 220, 289, 296, and 299 each coordinate Zn(2+).

The protein belongs to the RNA polymerase beta' chain family. RpoC2 subfamily. In terms of assembly, in plastids the minimal PEP RNA polymerase catalytic core is composed of four subunits: alpha, beta, beta', and beta''. When a (nuclear-encoded) sigma factor is associated with the core the holoenzyme is formed, which can initiate transcription. It depends on Zn(2+) as a cofactor.

The protein resides in the plastid. It localises to the chloroplast. It catalyses the reaction RNA(n) + a ribonucleoside 5'-triphosphate = RNA(n+1) + diphosphate. Functionally, DNA-dependent RNA polymerase catalyzes the transcription of DNA into RNA using the four ribonucleoside triphosphates as substrates. The protein is DNA-directed RNA polymerase subunit beta'' of Oenothera parviflora (Small-flowered evening primrose).